A 1399-amino-acid polypeptide reads, in one-letter code: MKDLLNLLKNQGQVEEFDAIRIGLASPEMIRSWSFGEVKKPETINYRTFKPERDGLFCAKIFGPVKDYECLCGKYKRLKHRGVICEKCGVEVALAKVRRERMAHIELASPVAHIWFLKSLPSRIGLLMDMTLRDIERVLYFESYVVIDPGMTTLEKGQLLNDEQYFEALEEFGDDFDARMGAEAVRELLHAIDLEHEIGRLREEIPQTNSETKIKKLSKRLKLMEAFQGSGNLPEWMVLTVLPVLPPDLRPLVPLDGGRFATSDLNDLYRRVINRNNRLKRLLDLSAPDIIVRNEKRMLQEAVDALLDNGRRGRAITGSNKRPLKSLADMIKGKQGRFRQNLLGKRVDYSGRSVITVGPTLRLHQCGLPKKMALELFKPFIFGKLEMRGLATTIKAAKKMVERELPEVWDVLAEVIREHPVLLNRAPTLHRLGIQAFEPVLIEGKAIQLHPLVCAAYNADFDGDQMAVHVPLTLEAQLEARALMMSTNNILSPANGEPIIVPSQDVVLGLYYMTREAINAKGEGRVFADLQEVDRVFRAGEAALHAKIKVRISETVNDRDGGSVSATRIVDTTVGRALLFQVVPKGLSFDVVNLPMKKKAISKLINQCYRVVGLKETVIFADQLMYTGFAYSTISGVSIGVNDFVIPDEKARIIGAATDEVKEIESQYASGLVTQGEKYNKVIDLWSKANDEVSKAMMANLSKEKVIDRNGDEVEQESFNSMYMMADSGARGSAAQIRQLAGMRGLMAKPDGSIIETPITANFREGLSVLQYFISTHGARKGLADTALKTANSGYLTRRLVDVAQDLVVTEIDCGTEHGLLMTPHIEGGDVVEPLGERVLGRVIARDVFKPGTEDVIVPAGTLVDEKWVEFIELNSIDEVIVRSPISCETRYGICAKCYGRDLARGHQVNIGEAVGVIAAQSIGEPGTQLTMRTFHIGGAASRTSAADSVQVKNGGTVRLHNLKHVERVDGHLVAVSRSGELAIADDFGRERERYKLPYGAVISVKEGDKVDAGAIVAKWDPHTHPIVTEMKGTVTYVGMEEGITIKRQTDELTGMTNIEVLDVKDRPAAGKDIRPAVKMVGMDGKDLLLPGTDVPAQYFLPANALVGVADGAQIAIGDVIARIPQETSKTRDITGGLPRVADLFEARRPKEASILAEVSGTIAFGKETKGKRRLVITPNDGSDPYEELIPKWRHLNVFEGEQVNRGEVISDGPSDPHDILRLLGVSALAKYIVNEIQDVYRLQGVKINDKHIETILRQMLRKVEIAESGDSSFIKGDQMELTHVLVENERLSTEDKFVAKFTRVLLGITKASLSTESFISAASFQETTRVLTEAAVTGKRDYLRGLKENVVVGRLIPAGTGLAYHSERKRRRDADKPLRVSASEVEAALTEALNSSGN.

Residues C70, C72, C85, and C88 each coordinate Zn(2+). D460, D462, and D464 together coordinate Mg(2+). Zn(2+) contacts are provided by C814, C888, C895, and C898.

This sequence belongs to the RNA polymerase beta' chain family. The RNAP catalytic core consists of 2 alpha, 1 beta, 1 beta' and 1 omega subunit. When a sigma factor is associated with the core the holoenzyme is formed, which can initiate transcription. Mg(2+) is required as a cofactor. Requires Zn(2+) as cofactor.

It catalyses the reaction RNA(n) + a ribonucleoside 5'-triphosphate = RNA(n+1) + diphosphate. DNA-dependent RNA polymerase catalyzes the transcription of DNA into RNA using the four ribonucleoside triphosphates as substrates. This is DNA-directed RNA polymerase subunit beta' from Pseudomonas fluorescens (strain ATCC BAA-477 / NRRL B-23932 / Pf-5).